Here is a 273-residue protein sequence, read N- to C-terminus: MAHPIPVVVNGATGKMGRETIKAIAAADDVTLVGAIARSADVQGQDIGEIVGLGPLEVPVTNDLEGMLCLASQEREVPVVVDFTHPDCIYDNVRKAIAYGVRPVVGTTGLNNEQLQELAEFAEKASVGCLVIPNFSIGMVLLMQAAIQASRFYDHVEILELHHDQKADAPSGTAIKTAQMLAELGKTFNPPKVTEKETMPGARGAVGPENIRIHSVRLPGLIAHEEVIFGAPGEILTLRHDTMDRSCYMPGVLLAVRKVRQLTGLIYGLDRIL.

Residues 11 to 16 and 106 to 108 contribute to the NAD(+) site; these read GATGKM and GTT. His-162 functions as the Proton donor/acceptor in the catalytic mechanism. His-163 is a (S)-2,3,4,5-tetrahydrodipicolinate binding site. The active-site Proton donor is the Lys-166. 172–173 serves as a coordination point for (S)-2,3,4,5-tetrahydrodipicolinate; the sequence is GT.

This sequence belongs to the DapB family.

Its subcellular location is the cytoplasm. It catalyses the reaction (S)-2,3,4,5-tetrahydrodipicolinate + NAD(+) + H2O = (2S,4S)-4-hydroxy-2,3,4,5-tetrahydrodipicolinate + NADH + H(+). The enzyme catalyses (S)-2,3,4,5-tetrahydrodipicolinate + NADP(+) + H2O = (2S,4S)-4-hydroxy-2,3,4,5-tetrahydrodipicolinate + NADPH + H(+). The protein operates within amino-acid biosynthesis; L-lysine biosynthesis via DAP pathway; (S)-tetrahydrodipicolinate from L-aspartate: step 4/4. Catalyzes the conversion of 4-hydroxy-tetrahydrodipicolinate (HTPA) to tetrahydrodipicolinate. The polypeptide is 4-hydroxy-tetrahydrodipicolinate reductase (Synechococcus elongatus (strain ATCC 33912 / PCC 7942 / FACHB-805) (Anacystis nidulans R2)).